A 409-amino-acid polypeptide reads, in one-letter code: F-box/kelch-repeat protein At1g48625 (409 aa).

The region spanning Ala-2–Met-49 is the F-box domain. Kelch repeat units lie at residues Phe-169 to Asn-218 and Trp-221 to Cys-266.

This Arabidopsis thaliana (Mouse-ear cress) protein is F-box/kelch-repeat protein At1g48625.